We begin with the raw amino-acid sequence, 75 residues long: Dermaseptin-SP4 (75 aa).

The signal sequence occupies residues 1–22 (MAFLKKSLFLVLFLGLVSLSMC). Residues 23-45 (EEEKRENEVEEEQEDDEQSELRR) constitute a propeptide that is removed on maturation. A Proline amide modification is found at proline 72. The propeptide occupies 74–75 (EQ).

It belongs to the frog skin active peptide (FSAP) family. Dermaseptin subfamily. Expressed by the skin glands.

The protein localises to the secreted. It localises to the target cell membrane. Antimicrobial peptide with activity against Gram-positive and Gram-negative bacteria and fungi. Has been tested against E.coli (MIC=47.25-128 uM), S.aureus (MIC=189-512 uM), K.pneumoniae (MIC=189 uM) and C.albicans (MIC&gt;189 uM). Probably acts by disturbing membrane functions with its alpha-helical amphipathic structure. May penetrate bacterial membranes, but stay at the mammalian membrane surface. Shows a weak hemolytic activity. The sequence is that of Dermaseptin-SP4 from Agalychnis spurrelli (Gliding leaf frog).